Reading from the N-terminus, the 493-residue chain is Leucine-rich repeat-containing protein 14 (493 aa).

One copy of the LRR 1; degenerate repeat lies at 111-146; sequence KHTLRVLDMTGLLDDGVEQDPGTMSMWDCTAAVART. An LRR 2; degenerate repeat occupies 194-218; sequence RLCCRDLRAEDLPMRNTVALLQLLD. The stretch at 219–246 is one LRR 3; degenerate repeat; that stretch reads AGCLRRIDLRFNNLGLRGLSVIIPHVAR. Residues 247–282 form an LRR 4; degenerate repeat; it reads FQHLASLRLHYVHGDSRQPSVDGEDNFRYFLAQMGR. 5 LRR repeats span residues 283–307, 308–339, 340–360, 364–391, and 392–416; these read FICL…LSTL, QRPL…AHLK, KLDL…QGLL, AATL…TLTR, and CASL…LLRD.

The protein belongs to the PRAME family. LRRC14 subfamily. As to quaternary structure, interacts with IKBKB; disrupts IKBKB-IKBKG interaction preventing I-kappa-B-kinase (IKK) core complex formation and leading to a decrease of IKBKB phosphorylation and NF-kappaB activation. Interacts with CHUK.

The protein localises to the cytoplasm. Its function is as follows. Negatively regulates Toll-like receptor-mediated NF-kappa-B signaling by disrupting IKK core complex formation through interaction with IKBKB. The sequence is that of Leucine-rich repeat-containing protein 14 from Rattus norvegicus (Rat).